Consider the following 227-residue polypeptide: PKHD-type hydroxylase Pden_4677 (227 aa).

A Fe2OG dioxygenase domain is found at H78 to S178. Fe cation contacts are provided by H96, D98, and H159. 2-oxoglutarate is bound at residue R169.

Requires Fe(2+) as cofactor. L-ascorbate serves as cofactor.

The polypeptide is PKHD-type hydroxylase Pden_4677 (Paracoccus denitrificans (strain Pd 1222)).